The sequence spans 204 residues: Isochorismatase domain-containing protein 2 (204 aa).

Belongs to the isochorismatase family. As to quaternary structure, interacts with CDKN2A.

It is found in the cytoplasm. Its subcellular location is the nucleus. In Bos taurus (Bovine), this protein is Isochorismatase domain-containing protein 2 (ISOC2).